The primary structure comprises 212 residues: Ribosomal RNA small subunit methyltransferase G (212 aa).

Residues G80, L85, 131-132 (AE), and R146 each bind S-adenosyl-L-methionine.

This sequence belongs to the methyltransferase superfamily. RNA methyltransferase RsmG family.

It localises to the cytoplasm. It catalyses the reaction guanosine(527) in 16S rRNA + S-adenosyl-L-methionine = N(7)-methylguanosine(527) in 16S rRNA + S-adenosyl-L-homocysteine. In terms of biological role, specifically methylates the N7 position of guanine in position 527 of 16S rRNA. In Xanthomonas campestris pv. campestris (strain B100), this protein is Ribosomal RNA small subunit methyltransferase G.